A 449-amino-acid chain; its full sequence is C4-dicarboxylate transport protein (449 aa).

Helical transmembrane passes span 18–38, 61–81, 93–113, 159–179, 202–222, 244–264, 311–331, and 369–389; these read PFYL…ALLG, MIIS…VAHV, VYFL…AHVV, FVGD…IALA, LVQM…AFTI, SLLF…FSIL, GYSF…LFIA, and AATL…ILGV.

Belongs to the dicarboxylate/amino acid:cation symporter (DAACS) (TC 2.A.23) family.

The protein localises to the cell inner membrane. Responsible for the transport of dicarboxylates such as succinate, fumarate, and malate from the periplasm across the membrane. This is C4-dicarboxylate transport protein from Xylella fastidiosa (strain M12).